The following is a 151-amino-acid chain: Large ribosomal subunit protein uL13 (151 aa).

It belongs to the universal ribosomal protein uL13 family. As to quaternary structure, part of the 50S ribosomal subunit.

Its function is as follows. This protein is one of the early assembly proteins of the 50S ribosomal subunit, although it is not seen to bind rRNA by itself. It is important during the early stages of 50S assembly. The sequence is that of Large ribosomal subunit protein uL13 from Synechococcus sp. (strain JA-2-3B'a(2-13)) (Cyanobacteria bacterium Yellowstone B-Prime).